A 165-amino-acid chain; its full sequence is Putative pre-16S rRNA nuclease (165 aa).

It belongs to the YqgF nuclease family.

Its subcellular location is the cytoplasm. Could be a nuclease involved in processing of the 5'-end of pre-16S rRNA. This chain is Putative pre-16S rRNA nuclease, found in Brucella anthropi (strain ATCC 49188 / DSM 6882 / CCUG 24695 / JCM 21032 / LMG 3331 / NBRC 15819 / NCTC 12168 / Alc 37) (Ochrobactrum anthropi).